The primary structure comprises 64 residues: MSQRQSGTVKWFNDEKGFGFITPQGGGDDLFVHFKAIESDGFKSLKEGQTVSFVAEKGQKGMQA.

In terms of domain architecture, CSD spans 7–64 (GTVKWFNDEKGFGFITPQGGGDDLFVHFKAIESDGFKSLKEGQTVSFVAEKGQKGMQA).

Its subcellular location is the cytoplasm. Affects cell viability at low temperatures. The chain is Cold shock protein CapA (capA) from Pseudomonas fragi.